Reading from the N-terminus, the 402-residue chain is Argininosuccinate synthase (402 aa).

Residue 9 to 17 participates in ATP binding; that stretch reads AYSGGLDTS. Y86 contributes to the L-citrulline binding site. G116 is a binding site for ATP. Residues T118, N122, and D123 each coordinate L-aspartate. N122 contacts L-citrulline. L-citrulline is bound by residues R126, S174, S183, E259, and Y271.

It belongs to the argininosuccinate synthase family. Type 1 subfamily. As to quaternary structure, homotetramer.

The protein localises to the cytoplasm. It catalyses the reaction L-citrulline + L-aspartate + ATP = 2-(N(omega)-L-arginino)succinate + AMP + diphosphate + H(+). Its pathway is amino-acid biosynthesis; L-arginine biosynthesis; L-arginine from L-ornithine and carbamoyl phosphate: step 2/3. This Geobacillus sp. (strain WCH70) protein is Argininosuccinate synthase.